The primary structure comprises 1113 residues: Poly(A) RNA polymerase gld-2 (1113 aa).

Disordered stretches follow at residues 1 to 113 (MVMA…PKYH), 134 to 175 (RPIF…PTQP), 205 to 266 (LYRS…GQDP), and 445 to 513 (LDDE…DEST). Over residues 22 to 52 (SPSVDSVSRVQQQSGGFAFYNQQSNHQYQQS) the composition is skewed to low complexity. Residues 60–106 (SRDGNTGYYNNHSGNKRQTYNNQRGGRSYNHRGNSNYQQNGEYSGNQ) are compositionally biased toward polar residues. A compositionally biased stretch (low complexity) spans 149-172 (RRSSPPSPSALSSSTANSTSNRAP). Residues 223-233 (YKQPPPQPPST) are compositionally biased toward pro residues. Basic and acidic residues predominate over residues 451–485 (GADHDKTIDENRRRIHKSQEPRIGTEEKALNELPR). Residues 492–507 (SSCSSISSVSESSSPS) show a composition bias toward low complexity. D606 and D608 together coordinate Mg(2+). Residues 780 to 816 (TLGELLIGFLDYYANEFNYDRDAISIRQGRRVERAAL) form the PAP-associated domain. 2 disordered regions span residues 817-854 (AVRPKIHSNSEGDKETPPPSSSASTSSIHNGGTPGIPM) and 966-1113 (GPGH…NVSQ). Polar residues predominate over residues 972–994 (YQQQSNQNLSRPQRPGSNQGYQM). Composition is skewed to low complexity over residues 995–1035 (NNNR…SRSN) and 1044–1061 (QQNSQKGSSGVSVSKENV). The span at 1069-1084 (VDKKQQNSNRKDDGNR) shows a compositional bias: basic and acidic residues.

This sequence belongs to the DNA polymerase type-B-like family. GLD2 subfamily. Interacts with gld-3. Mg(2+) is required as a cofactor. Requires Mn(2+) as cofactor. In terms of tissue distribution, germline-specific.

It localises to the cytoplasm. It carries out the reaction RNA(n) + ATP = RNA(n)-3'-adenine ribonucleotide + diphosphate. Its function is as follows. Cytoplasmic poly(A) RNA polymerase that adds successive AMP monomers to the 3'-end of specific RNAs, forming a poly(A) tail. Acts as a regulator of mitosis/meiosis required for progression through meiotic prophase during oogenesis and spermatogenesis and for promotion of the entry into meiosis from the mitotic cell cycle. May act by regulating and activating gld-1 mRNA activity in germline. Required for polyadenylation of neg-1 mRNA during embryogenesis. The protein is Poly(A) RNA polymerase gld-2 (gld-2) of Caenorhabditis elegans.